Reading from the N-terminus, the 847-residue chain is Putative disease resistance RPP13-like protein 3 (847 aa).

The stretch at 24–41 forms a coiled coil; it reads LMGVKDDLEELKTELTCI. In terms of domain architecture, NB-ARC spans 143-453; sequence TNVRVRQLRR…AEGFIQEDEE (311 aa). 192-199 is a binding site for ATP; that stretch reads GMGGLGKT.

The protein belongs to the disease resistance NB-LRR family. RPP13 subfamily.

Functionally, potential disease resistance protein. This Arabidopsis thaliana (Mouse-ear cress) protein is Putative disease resistance RPP13-like protein 3 (RPP13L3).